We begin with the raw amino-acid sequence, 183 residues long: MREYKVVVLGSGGVGKSALTVQFVTGTFIEKYDPTIEDFYRKEIEVDSSPSVLEILDTAGTEQFASMRDLYIKNGQGFILVYSLVNQQSFQDIKPMRDQIIRVKRYEKVPVILVGNKVDLESEREVSSNEGRALAEEWGCPFMETSAKSKTMVDELFAEIVRQMNYAAQPDKDDPCCSACNIQ.

Residue 10–17 (GSGGVGKS) participates in GTP binding. The Effector region motif lies at 32 to 40 (YDPTIEDFY). Residues 57-61 (DTAGT) and 116-119 (NKVD) contribute to the GTP site. Residues cysteine 176 and cysteine 177 are each lipidated (S-palmitoyl cysteine). At cysteine 180 the chain carries Cysteine methyl ester. Cysteine 180 is lipidated: S-farnesyl cysteine. A propeptide spans 181 to 183 (NIQ) (removed in mature form).

Belongs to the small GTPase superfamily. Ras family. As to quaternary structure, interacts with PLCE1. Interacts with ARHGAP29, SGSM1, SGSM2 and SGSM3. Interacts (GTP-bound form preferentially) with MAP4K4. Interacts with MINK1. Interacts with cytoskeletal actin. Interacts (GTP-bound form) with RUNDC3A. Interacts (GTP-bound form preferentially) with TNIK (via the CNH domain); the interaction is direct and recruits RAP2A to the E3 ubiquitin ligase NEDD4. Interacts with RGS14; the interaction is GTP-dependent. In terms of processing, ubiquitinated; undergoes 'Lys-63' monoubiquitination and diubiquitination by NEDD4. Multiple lysine residues are probably modified. Ubiquitination requires TNIK, prevents interaction with effectors and inactivates RAP2A. Ubiquitination by the ECS(RAB40B) complex leads to RAP2A localization to lamellipodia plasma membrane, activation, and regulation of sorting at early endosomes for recycling to the lamellipodia plasma membrane. Post-translationally, palmitoylated. Palmitoylation is required for association with recycling endosome membranes and activation of TNIK. In terms of tissue distribution, expressed in granular layer of the cerebellum, forebrain, striatum, layer V of the cortex, olfactory cortex, tubercules, subthalamic and hippocampus, particularly in the CA2 region, to a lesser extent in the CA1 region and the external layer of the dentate gyrus. Expressed in neurons.

Its subcellular location is the midbody. It localises to the cell projection. The protein localises to the lamellipodium membrane. The protein resides in the golgi apparatus. It is found in the recycling endosome membrane. Its subcellular location is the lysosome. The enzyme catalyses GTP + H2O = GDP + phosphate + H(+). With respect to regulation, activated by the guanine nucleotide-exchange factors RAPGEF3 and RAPGEF4 in a cAMP-dependent manner. Nucleotide exchange is also specifically stimulated by RAPGEF5, RASGEF1A and RASGEF1B. Its function is as follows. Small GTP-binding protein which cycles between a GDP-bound inactive and a GTP-bound active form. In its active form interacts with and regulates several effectors including MAP4K4, MINK1 and TNIK. Part of a signaling complex composed of NEDD4, RAP2A and TNIK which regulates neuronal dendrite extension and arborization during development. More generally, it is part of several signaling cascades and may regulate cytoskeletal rearrangements, cell migration, cell adhesion and cell spreading. The polypeptide is Ras-related protein Rap-2a (Mus musculus (Mouse)).